Here is a 450-residue protein sequence, read N- to C-terminus: Bifunctional protein GlmU (450 aa).

The segment at 1–221 is pyrophosphorylase; that stretch reads MRCIVLAAGM…SCEFIGINNR (221 aa). UDP-N-acetyl-alpha-D-glucosamine is bound by residues 6-9, K20, Q69, 74-75, 96-98, G135, E150, N165, and N219; these read LAAG, GT, and YGD. D98 serves as a coordination point for Mg(2+). Residue N219 coordinates Mg(2+). A linker region spans residues 222 to 242; sequence IQLAQAEKFRRQWILEELMIK. Positions 243 to 450 are N-acetyltransferase; sequence GVTIVDPETT…VIDKRKKEED (208 aa). UDP-N-acetyl-alpha-D-glucosamine is bound by residues R324 and K342. H354 serves as the catalytic Proton acceptor. Y357 and N368 together coordinate UDP-N-acetyl-alpha-D-glucosamine. Acetyl-CoA contacts are provided by A371, S396, A414, and R431.

In the N-terminal section; belongs to the N-acetylglucosamine-1-phosphate uridyltransferase family. The protein in the C-terminal section; belongs to the transferase hexapeptide repeat family. As to quaternary structure, homotrimer. Mg(2+) serves as cofactor.

The protein resides in the cytoplasm. It carries out the reaction alpha-D-glucosamine 1-phosphate + acetyl-CoA = N-acetyl-alpha-D-glucosamine 1-phosphate + CoA + H(+). It catalyses the reaction N-acetyl-alpha-D-glucosamine 1-phosphate + UTP + H(+) = UDP-N-acetyl-alpha-D-glucosamine + diphosphate. Its pathway is nucleotide-sugar biosynthesis; UDP-N-acetyl-alpha-D-glucosamine biosynthesis; N-acetyl-alpha-D-glucosamine 1-phosphate from alpha-D-glucosamine 6-phosphate (route II): step 2/2. It functions in the pathway nucleotide-sugar biosynthesis; UDP-N-acetyl-alpha-D-glucosamine biosynthesis; UDP-N-acetyl-alpha-D-glucosamine from N-acetyl-alpha-D-glucosamine 1-phosphate: step 1/1. The protein operates within bacterial outer membrane biogenesis; LPS lipid A biosynthesis. Catalyzes the last two sequential reactions in the de novo biosynthetic pathway for UDP-N-acetylglucosamine (UDP-GlcNAc). The C-terminal domain catalyzes the transfer of acetyl group from acetyl coenzyme A to glucosamine-1-phosphate (GlcN-1-P) to produce N-acetylglucosamine-1-phosphate (GlcNAc-1-P), which is converted into UDP-GlcNAc by the transfer of uridine 5-monophosphate (from uridine 5-triphosphate), a reaction catalyzed by the N-terminal domain. This Pseudothermotoga lettingae (strain ATCC BAA-301 / DSM 14385 / NBRC 107922 / TMO) (Thermotoga lettingae) protein is Bifunctional protein GlmU.